The sequence spans 608 residues: Formate hydrogenlyase subunit 3 (608 aa).

12 consecutive transmembrane segments (helical) span residues 10–26, 44–67, 76–93, 116–140, 153–173, 197–218, 229–251, 258–280, 296–312, 416–440, 453–476, and 502–521; these read GVAW…LFSF, LYTA…LSLV, LNAI…FVSL, AAAV…MALC, LWFA…WLLW, IWLL…HGWV, AAAL…LSLL, WWGI…YALV, IGII…GIAL, LAVG…VTFL, CAPL…GVAA, and MITL…MAIC.

It belongs to the complex I subunit 4 family. FHL comprises of a formate dehydrogenase, unidentified electron carriers and a hydrogenase (isoenzyme 3). In this non-energy conserving pathway molecular hydrogen and carbodioxide from formate are released.

It localises to the cell inner membrane. The protein is Formate hydrogenlyase subunit 3 (hycC) of Escherichia coli (strain K12).